We begin with the raw amino-acid sequence, 683 residues long: Methionine--tRNA ligase (683 aa).

Positions 15 to 25 match the 'HIGH' region motif; that stretch reads PYANGPIHLGH. Zn(2+) is bound by residues Cys146, Cys149, Cys159, and Cys162. Positions 332 to 336 match the 'KMSKS' region motif; that stretch reads KMSKS. Residue Lys335 participates in ATP binding. The region spanning 581–683 is the tRNA-binding domain; it reads DFFKVDLRVA…AGAKAGQRVK (103 aa).

The protein belongs to the class-I aminoacyl-tRNA synthetase family. MetG type 1 subfamily. Homodimer. Requires Zn(2+) as cofactor.

The protein resides in the cytoplasm. It carries out the reaction tRNA(Met) + L-methionine + ATP = L-methionyl-tRNA(Met) + AMP + diphosphate. Functionally, is required not only for elongation of protein synthesis but also for the initiation of all mRNA translation through initiator tRNA(fMet) aminoacylation. This is Methionine--tRNA ligase from Histophilus somni (strain 129Pt) (Haemophilus somnus).